Reading from the N-terminus, the 97-residue chain is UPF0235 protein HD_0778 (97 aa).

It belongs to the UPF0235 family.

The protein is UPF0235 protein HD_0778 of Haemophilus ducreyi (strain 35000HP / ATCC 700724).